The chain runs to 218 residues: Small ribosomal subunit protein uS3c (218 aa).

The KH type-2 domain maps to 47–118; the sequence is VQKEMRISSG…RLNVVITRVA (72 aa).

The protein belongs to the universal ribosomal protein uS3 family. Part of the 30S ribosomal subunit.

It is found in the plastid. The protein localises to the chloroplast. The sequence is that of Small ribosomal subunit protein uS3c (rps3) from Ceratophyllum demersum (Rigid hornwort).